The sequence spans 145 residues: Dihydrolipoyllysine-residue succinyltransferase component of 2-oxoglutarate dehydrogenase complex, mitochondrial (145 aa).

The region spanning Ile4–Leu31 is the Lipoyl-binding domain. Phosphoserine is present on Ser14. Residues Lys36 and Lys66 each carry the N6-acetyllysine modification. Catalysis depends on residues His119 and Asp123.

The protein belongs to the 2-oxoacid dehydrogenase family. As to quaternary structure, the 2-oxoglutarate dehydrogenase complex is composed of OGDH (2-oxoglutarate dehydrogenase; E1), DLST (dihydrolipoamide succinyltransferase; E2), DLD (dihydrolipoamide dehydrogenase; E3) and the assembly factor KGD4. It contains multiple copies of the three enzymatic components (E1, E2 and E3). In the nucleus, the 2-oxoglutarate dehydrogenase complex associates with KAT2A. Interacts with ABHD11; this interaction maintains the functional lipoylation of the 2-oxoglutarate dehydrogenase complex. Requires (R)-lipoate as cofactor.

The protein localises to the mitochondrion matrix. Its subcellular location is the nucleus. It catalyses the reaction N(6)-[(R)-dihydrolipoyl]-L-lysyl-[protein] + succinyl-CoA = N(6)-[(R)-S(8)-succinyldihydrolipoyl]-L-lysyl-[protein] + CoA. The protein operates within amino-acid degradation; L-lysine degradation via saccharopine pathway; glutaryl-CoA from L-lysine: step 6/6. It functions in the pathway carbohydrate metabolism; tricarboxylic acid cycle. Its function is as follows. Dihydrolipoamide succinyltransferase (E2) component of the 2-oxoglutarate dehydrogenase complex. The 2-oxoglutarate dehydrogenase complex catalyzes the overall conversion of 2-oxoglutarate to succinyl-CoA and CO(2). The 2-oxoglutarate dehydrogenase complex is mainly active in the mitochondrion. A fraction of the 2-oxoglutarate dehydrogenase complex also localizes in the nucleus and is required for lysine succinylation of histones: associates with KAT2A on chromatin and provides succinyl-CoA to histone succinyltransferase KAT2A. In Mesocricetus auratus (Golden hamster), this protein is Dihydrolipoyllysine-residue succinyltransferase component of 2-oxoglutarate dehydrogenase complex, mitochondrial.